A 228-amino-acid polypeptide reads, in one-letter code: Acyl-protein thioesterase 1 (228 aa).

Active-site charge relay system residues include Ser119, Asp174, and His208.

Belongs to the AB hydrolase superfamily. AB hydrolase 2 family.

Its subcellular location is the cytoplasm. It localises to the nucleus. It carries out the reaction S-hexadecanoyl-L-cysteinyl-[protein] + H2O = L-cysteinyl-[protein] + hexadecanoate + H(+). Functionally, hydrolyzes fatty acids from S-acylated cysteine residues in proteins with a strong preference for palmitoylated G-alpha proteins over other acyl substrates. Mediates the deacylation of G-alpha proteins such as GPA1 in vivo, but has weak or no activity toward palmitoylated Ras proteins. Has weak lysophospholipase activity in vitro; however such activity may not exist in vivo. This Kluyveromyces lactis (strain ATCC 8585 / CBS 2359 / DSM 70799 / NBRC 1267 / NRRL Y-1140 / WM37) (Yeast) protein is Acyl-protein thioesterase 1.